The following is a 247-amino-acid chain: Ribonuclease PH (247 aa).

Phosphate is bound by residues Arg90 and 128-130 (GTR).

It belongs to the RNase PH family. Homohexameric ring arranged as a trimer of dimers.

The enzyme catalyses tRNA(n+1) + phosphate = tRNA(n) + a ribonucleoside 5'-diphosphate. In terms of biological role, phosphorolytic 3'-5' exoribonuclease that plays an important role in tRNA 3'-end maturation. Removes nucleotide residues following the 3'-CCA terminus of tRNAs; can also add nucleotides to the ends of RNA molecules by using nucleoside diphosphates as substrates, but this may not be physiologically important. Probably plays a role in initiation of 16S rRNA degradation (leading to ribosome degradation) during starvation. In Synechococcus sp. (strain CC9605), this protein is Ribonuclease PH.